The primary structure comprises 270 residues: F420 non-reducing hydrogenase II cytochrome subunit (270 aa).

The next 5 helical transmembrane spans lie at 27–47 (AIAM…WEFM), 57–77 (MIAV…NIFS), 139–159 (ILIP…IVLY), 173–193 (WIIS…VGFL), and 195–215 (VLHL…VGIL).

Belongs to the HupC/HyaC/HydC family. As to quaternary structure, composed of a large subunit (VhtA), a small subunit (VhtG) and a cytochrome subunit (VhtC). It depends on heme b as a cofactor.

Its subcellular location is the cell membrane. The catalysed reaction is methanophenazine + H2 = dihydromethanophenazine. In terms of biological role, part of the F420 non-reducing hydrogenase II complex that catalyzes the reduction of methanophenazine to dihydromethanophenazine. This chain is F420 non-reducing hydrogenase II cytochrome subunit, found in Methanosarcina mazei (strain ATCC BAA-159 / DSM 3647 / Goe1 / Go1 / JCM 11833 / OCM 88) (Methanosarcina frisia).